Reading from the N-terminus, the 176-residue chain is NAD(P)H-quinone oxidoreductase subunit 6, chloroplastic (176 aa).

A run of 5 helical transmembrane segments spans residues 10–30 (FLLV…VLFP), 32–52 (PIFS…LYIL), 61–81 (AQLL…VMFM), 95–115 (VGDG…ISTI), and 152–172 (FFLP…GAIS).

Belongs to the complex I subunit 6 family. In terms of assembly, NDH is composed of at least 16 different subunits, 5 of which are encoded in the nucleus.

The protein resides in the plastid. Its subcellular location is the chloroplast thylakoid membrane. It carries out the reaction a plastoquinone + NADH + (n+1) H(+)(in) = a plastoquinol + NAD(+) + n H(+)(out). The catalysed reaction is a plastoquinone + NADPH + (n+1) H(+)(in) = a plastoquinol + NADP(+) + n H(+)(out). NDH shuttles electrons from NAD(P)H:plastoquinone, via FMN and iron-sulfur (Fe-S) centers, to quinones in the photosynthetic chain and possibly in a chloroplast respiratory chain. The immediate electron acceptor for the enzyme in this species is believed to be plastoquinone. Couples the redox reaction to proton translocation, and thus conserves the redox energy in a proton gradient. The chain is NAD(P)H-quinone oxidoreductase subunit 6, chloroplastic (ndhG) from Aethionema cordifolium (Lebanon stonecress).